The sequence spans 281 residues: 3-methyl-2-oxobutanoate hydroxymethyltransferase (281 aa).

The Mg(2+) site is built by Asp-49 and Asp-88. 3-methyl-2-oxobutanoate is bound by residues 49 to 50 (DS), Asp-88, and Lys-118. Residue Glu-120 coordinates Mg(2+). The active-site Proton acceptor is the Glu-186.

It belongs to the PanB family. Homodecamer; pentamer of dimers. Requires Mg(2+) as cofactor.

It localises to the cytoplasm. The enzyme catalyses 3-methyl-2-oxobutanoate + (6R)-5,10-methylene-5,6,7,8-tetrahydrofolate + H2O = 2-dehydropantoate + (6S)-5,6,7,8-tetrahydrofolate. It functions in the pathway cofactor biosynthesis; (R)-pantothenate biosynthesis; (R)-pantoate from 3-methyl-2-oxobutanoate: step 1/2. In terms of biological role, catalyzes the reversible reaction in which hydroxymethyl group from 5,10-methylenetetrahydrofolate is transferred onto alpha-ketoisovalerate to form ketopantoate. The polypeptide is 3-methyl-2-oxobutanoate hydroxymethyltransferase (Chelativorans sp. (strain BNC1)).